We begin with the raw amino-acid sequence, 1050 residues long: Antibiotic efflux pump membrane transporter ArpB (1050 aa).

Helical transmembrane passes span 10–30 (IFAW…ILKL), 339–359 (GVIH…YLFL), 370–390 (MTVP…GFSI), 393–413 (LTMF…IVVV), 440–460 (GALV…AFFG), 472–492 (ITIV…TPAL), 539–559 (VPFL…FARI), 871–891 (MPAL…ALYE), 893–913 (WSIP…ALIA), 923–943 (VYFL…AILI), 972–992 (IIMT…ASGA), and 1004–1024 (VIGG…LFFV).

The protein belongs to the resistance-nodulation-cell division (RND) (TC 2.A.6) family.

The protein localises to the cell inner membrane. In terms of biological role, the inner membrane transporter component of an antibiotic efflux pump. Confers resistance to numerous structurally unrelated antibiotics such as carbenicillin, chloramphenicol, erythromycin, novobiocin, streptomycin and tetracycline. Is not involved in organic solvent efflux. The chain is Antibiotic efflux pump membrane transporter ArpB (arpB) from Pseudomonas putida (Arthrobacter siderocapsulatus).